Consider the following 524-residue polypeptide: MSDTYLVAASGLAVCFFVLYLLRPKTALPPGPPKLPLIGNLHQLGKKPMYERCQEWHRQFGKLISLKLGFDNVVVIGSSQIARDLLDKKGAMYSSRPKFVMAHENVTKGFHTATLPYGPRWRLHNRMQLSVLNKRIVTRCRQVQEFESLQLIHELLFTNDFHPRFQRWANSLQTGLGYGQRLAKGDECNIHEMEHISRVFREIFATGTWLVDLFPALNHLPPLLAPWKGVAEQHYNRTIELFQLNTAAALSKTSWNWTKKIRSLTESQGLPPDEVNFLVGVMAEAGGDTTGVVLDMFTLAAALHPEKMAIAQKEIDTVVGTDRLPNFGDVDKLPYLAALIKECLRWHPAAPFGLPHSVMQDDTYDGYHIPAGTTIIASQWSINFDPETFPNPYEFRPERYLENPDLPISSFGFGRRACPGRYFAMDSLFISISRVLWTFNIRPIKQGKDDPPMPAWEFVMDGALLRPAPFKALFSARDIHRQRFVIKEWAAAEKSVDVEALYDAIEPAGGDFSAQEKEEPVLVA.

Residues 2 to 22 (SDTYLVAASGLAVCFFVLYLL) traverse the membrane as a helical segment. Position 418 (C418) interacts with heme.

The protein belongs to the cytochrome P450 family. The cofactor is heme.

It is found in the membrane. It participates in secondary metabolite biosynthesis; terpenoid biosynthesis. Its function is as follows. Cytochrome P450 monooxygenase; part of the gene cluster that mediates the biosynthesis of various drimane-type sesquiterpene esters, compounds that exhibit diverse biological activities and are widely present in eukaryotes. The pathway begins with the synthesis of the backbone drimenol by the terpene cyclase drtB using farnesyl pyrophosphate (FPP) as substrate. The cytochrome P450 monooxygenase drtD is then responsible for the hydroxylations at C-6, C-9 and C-12, as well as the oxidation of hydroxyl groups at C-6 and C-11 to a ketone and an aldehyde, respectively. Then, the biosynthesis can go in two directions, either the hydroxylated drimenol is further hydroxylated at C-2 and C-3 by an enzyme(s) not associated with the drt cluster, or the FAD-binding oxidoreductase drtC further oxidizes C-11 or C-12 to form the butyrolactone ring. DrtB, drtD and drtC are solely responsible for the formation of the different drimane structures observed during drimane sesquiterpenes biosynthesis. The polyketide synthase drtA synthesizes different lengths (C6 and C8) of PKS chains, which are then oxidized to varying degrees by the short-chain dehydrogenase drtF. Finally, these PKS chains are transferred onto drimane sesquiterpenes by the acyltransferase drtE, forming the sesquiterpene esters. In addition to the different fatty acyl-CoA chains produced by drtA, drtE is also able to use cinnamoyl-CoA as a substrate. The chain is Cytochrome P450 monooxygenase drtD from Aspergillus calidoustus.